Reading from the N-terminus, the 144-residue chain is Large ribosomal subunit protein uL15 (144 aa).

The disordered stretch occupies residues 1–45 (MNLNTLSPDPGSRPSRRRVGRGIGSGLGKTCGKGHKGQKSRAGGY). Residues 21–31 (RGIGSGLGKTC) are compositionally biased toward gly residues.

It belongs to the universal ribosomal protein uL15 family. As to quaternary structure, part of the 50S ribosomal subunit.

Functionally, binds to the 23S rRNA. The polypeptide is Large ribosomal subunit protein uL15 (Legionella pneumophila (strain Corby)).